The primary structure comprises 364 residues: Guanine nucleotide-binding protein alpha-8 subunit (364 aa).

A lipid anchor (N-myristoyl glycine) is attached at G2. A lipid anchor (S-palmitoyl cysteine) is attached at C5. Residues 38–364 (KILKLLILGP…QHTMQKVGIQ (327 aa)) enclose the G-alpha domain. The interval 41 to 54 (KLLILGPGESGKST) is G1 motif. Residues 46 to 53 (GPGESGKS), 186 to 192 (LKSRVPT), 211 to 215 (DVGGQ), 280 to 283 (NKID), and A336 each bind GTP. S53 and T192 together coordinate Mg(2+). Residues 184 to 192 (DILKSRVPT) form a G2 motif region. Positions 207–216 (FRIFDVGGQR) are G3 motif. Residues 276–283 (ILFLNKID) form a G4 motif region. A G5 motif region spans residues 334–339 (TCATDT).

Belongs to the G-alpha family. In terms of assembly, g proteins are composed of 3 units; alpha, beta and gamma. The alpha chain contains the guanine nucleotide binding site.

Functionally, guanine nucleotide-binding proteins (G proteins) are involved as modulators or transducers in various transmembrane signaling systems. The polypeptide is Guanine nucleotide-binding protein alpha-8 subunit (gpa-8) (Caenorhabditis elegans).